The primary structure comprises 98 residues: uncharacterized protein (98 aa).

The segment at 58 to 98 (ARFPVEDTAGGLLRTGGHRPQISDEEVSKRHHEQSHGQEDH) is disordered.

This is an uncharacterized protein from Saccharomyces cerevisiae (strain ATCC 204508 / S288c) (Baker's yeast).